The following is a 314-amino-acid chain: 3'-5' exoribonuclease YhaM (314 aa).

Residues 163-279 (HVVSMLNLAK…LHYIDNLDAK (117 aa)) form the HD domain.

It belongs to the YhaM family.

Functionally, shows a 3'-5' exoribonuclease activity. The chain is 3'-5' exoribonuclease YhaM from Bacillus velezensis (strain DSM 23117 / BGSC 10A6 / LMG 26770 / FZB42) (Bacillus amyloliquefaciens subsp. plantarum).